We begin with the raw amino-acid sequence, 895 residues long: La RNA-binding domain-containing protein LHP1 (895 aa).

5 disordered regions span residues 24-265, 285-344, 359-590, 796-857, and 870-895; these read ANGN…PPPS, SATS…HDAT, GEDK…LGHG, PDAA…AQDV, and VNGEIKEKEEVKAMENEGEESENYEQ. Residues 31 to 75 are compositionally biased toward low complexity; the sequence is SSPSSSSSATPEPTSLSSSTSGKKAFSTATSKSGQQKQGSSPQPG. Basic and acidic residues predominate over residues 95–143; that stretch reads QRTDRSEEKEKRGSSSKNWRERSHRDEKNQDDGEKRNGRERSKKEKGDK. Residues 152 to 170 show a composition bias toward low complexity; that stretch reads SATSSEKTAKSLSSSTKNA. Composition is skewed to polar residues over residues 172 to 184 and 192 to 216; these read GVTSSSQGENPIA and KAQNDSTFRSSSAAAPVGPTTSTIN. Residues 228–244 show a composition bias toward basic and acidic residues; that stretch reads DNWRARPAKVEKNEKTE. Low complexity predominate over residues 251-260; the sequence is QAQPQPQRQL. The segment covering 296 to 314 has biased composition (basic and acidic residues); sequence KSDKEKSLTNGMVKEEDSG. Residues 325–336 show a composition bias toward low complexity; it reads AAAAAAAGTSST. Composition is skewed to basic and acidic residues over residues 359-371, 405-428, 452-468, and 485-495; these read GEDKKEKAKERLN, HAAEQSRRQNRMEAKKRSSGREGG, EGKKARKEGAQQKDGHA, and GDVKETKEGDA. Over residues 496–508 the composition is skewed to low complexity; the sequence is RSASQQESSSHRS. Positions 510–521 are enriched in polar residues; that stretch reads PSISASANTGID. Positions 563 to 572 are enriched in gly residues; it reads RGSFGGGRAR. An HTH La-type RNA-binding domain is found at 706–796; sequence VPNLDPLRFY…GAESHRWVLP (91 aa). Residue Ser-847 is modified to Phosphoserine. Positions 873-884 are enriched in basic and acidic residues; the sequence is EIKEKEEVKAME. Residues 885–895 are compositionally biased toward acidic residues; the sequence is NEGEESENYEQ.

Functionally, may act as an RNA-binding protein. This is La RNA-binding domain-containing protein LHP1 from Cryptococcus neoformans var. grubii serotype A (strain H99 / ATCC 208821 / CBS 10515 / FGSC 9487) (Filobasidiella neoformans var. grubii).